A 308-amino-acid chain; its full sequence is Ribonuclease HIII (308 aa).

The 217-residue stretch at 88-304 (FHCIGSDEAG…RDKAIHLMNQ (217 aa)) folds into the RNase H type-2 domain. A divalent metal cation contacts are provided by Asp94, Glu95, and Asp199.

It belongs to the RNase HII family. RnhC subfamily. Requires Mn(2+) as cofactor. It depends on Mg(2+) as a cofactor.

It is found in the cytoplasm. It catalyses the reaction Endonucleolytic cleavage to 5'-phosphomonoester.. In terms of biological role, endonuclease that specifically degrades the RNA of RNA-DNA hybrids. In Staphylococcus epidermidis (strain ATCC 12228 / FDA PCI 1200), this protein is Ribonuclease HIII.